We begin with the raw amino-acid sequence, 234 residues long: LexA repressor (234 aa).

A DNA-binding region (H-T-H motif) is located at residues 41 to 61 (RAEIANELGFKSANAAEEHLQ). Catalysis depends on for autocatalytic cleavage activity residues Ser152 and Lys189.

Belongs to the peptidase S24 family. In terms of assembly, homodimer.

The catalysed reaction is Hydrolysis of Ala-|-Gly bond in repressor LexA.. Represses a number of genes involved in the response to DNA damage (SOS response), including recA and lexA. In the presence of single-stranded DNA, RecA interacts with LexA causing an autocatalytic cleavage which disrupts the DNA-binding part of LexA, leading to derepression of the SOS regulon and eventually DNA repair. This Polaromonas sp. (strain JS666 / ATCC BAA-500) protein is LexA repressor.